A 207-amino-acid chain; its full sequence is Large ribosomal subunit protein uL4 (207 aa).

This sequence belongs to the universal ribosomal protein uL4 family. In terms of assembly, part of the 50S ribosomal subunit.

Functionally, one of the primary rRNA binding proteins, this protein initially binds near the 5'-end of the 23S rRNA. It is important during the early stages of 50S assembly. It makes multiple contacts with different domains of the 23S rRNA in the assembled 50S subunit and ribosome. Forms part of the polypeptide exit tunnel. The polypeptide is Large ribosomal subunit protein uL4 (Geobacter sulfurreducens (strain ATCC 51573 / DSM 12127 / PCA)).